The following is a 1141-amino-acid chain: DNA-directed RNA polymerase subunit beta (1141 aa).

Belongs to the RNA polymerase beta chain family. The RNAP catalytic core consists of 2 alpha, 1 beta, 1 beta' and 1 omega subunit. When a sigma factor is associated with the core the holoenzyme is formed, which can initiate transcription.

The enzyme catalyses RNA(n) + a ribonucleoside 5'-triphosphate = RNA(n+1) + diphosphate. Functionally, DNA-dependent RNA polymerase catalyzes the transcription of DNA into RNA using the four ribonucleoside triphosphates as substrates. This chain is DNA-directed RNA polymerase subunit beta, found in Parafrankia sp. (strain EAN1pec).